Here is a 407-residue protein sequence, read N- to C-terminus: Probable sodium/metabolite cotransporter BASS5, chloroplastic (407 aa).

The N-terminal 57 residues, 1–57, are a transit peptide targeting the chloroplast; sequence MGVISPTETLFLKSQHRLLQPRNYSYALAFHSTRRVANFPRNSFSSLGSCSVDFPLR. The next 9 membrane-spanning stretches (helical) occupy residues 101–121, 122–142, 162–184, 191–213, 222–242, 252–272, 286–306, 317–337, and 379–399; these read FIPH…PSFT, WFKP…VGIN, YIGQ…VSLF, GAGI…TFLT, IVMT…LSLL, VFGM…AGLL, PFLP…PLAL, ATIL…GYFF, and LVGV…VSLV.

This sequence belongs to the bile acid:sodium symporter (BASS) (TC 2.A.28) family. Widely expressed.

The protein localises to the membrane. It localises to the plastid. The protein resides in the chloroplast envelope. Plastidic transporter involved in the biosynthesis of aliphatic glucosinolates by translocating the biosynthetic intermediates of Met-derived glucosinolates across chloroplast membranes. Transports short chain (C2) alpha-keto acids, such as 4-methylsulfanyl-2-oxobutanoic acid, from the cytosol to the chloroplast where they are subjected to chain elongation cycles. Also functions in the transport of chain-elongated (C3 to C8) Met derivatives from the chloroplast to the cytosol. Does not seem to be involved in the transport of indole-derived glucosinolates. The sequence is that of Probable sodium/metabolite cotransporter BASS5, chloroplastic (BASS5) from Arabidopsis thaliana (Mouse-ear cress).